The primary structure comprises 326 residues: ATP-dependent 6-phosphofructokinase (326 aa).

Gly12 is an ATP binding site. Residue 22–26 participates in ADP binding; sequence RAIIK. ATP contacts are provided by residues 73–74 and 103–106; these read RF and GDGS. A Mg(2+)-binding site is contributed by Asp104. Position 126–128 (126–128) interacts with substrate; that stretch reads TID. Asp128 functions as the Proton acceptor in the catalytic mechanism. ADP is bound at residue Arg155. Substrate is bound by residues Arg163 and 170–172; that span reads MGH. ADP contacts are provided by residues 186-188, Lys212, and 215-217; these read GSE and KRS. Substrate contacts are provided by residues Glu224, Lys246, and 252 to 255; that span reads HIQR.

It belongs to the phosphofructokinase type A (PFKA) family. ATP-dependent PFK group I subfamily. Prokaryotic clade 'B1' sub-subfamily. Homotetramer. The cofactor is Mg(2+).

Its subcellular location is the cytoplasm. The catalysed reaction is beta-D-fructose 6-phosphate + ATP = beta-D-fructose 1,6-bisphosphate + ADP + H(+). Its pathway is carbohydrate degradation; glycolysis; D-glyceraldehyde 3-phosphate and glycerone phosphate from D-glucose: step 3/4. With respect to regulation, allosterically activated by ADP and other diphosphonucleosides, and allosterically inhibited by phosphoenolpyruvate. Catalyzes the phosphorylation of D-fructose 6-phosphate to fructose 1,6-bisphosphate by ATP, the first committing step of glycolysis. The polypeptide is ATP-dependent 6-phosphofructokinase (Mycoplasmopsis pulmonis (strain UAB CTIP) (Mycoplasma pulmonis)).